A 295-amino-acid polypeptide reads, in one-letter code: Accessory protein VasW (295 aa).

Its function is as follows. Plays an accessory role in VasX-mediated bacterial killing. The chain is Accessory protein VasW from Vibrio cholerae serotype O1 (strain ATCC 39315 / El Tor Inaba N16961).